A 364-amino-acid chain; its full sequence is Mitogen-activated protein kinase 11 (364 aa).

The region spanning Leu-24 to Phe-308 is the Protein kinase domain. Residues Val-30–Val-38 and Lys-53 each bind ATP. Glu-71 serves as a coordination point for nilotinib. The Proton acceptor role is filled by Asp-150. Thr-180 bears the Phosphothreonine; by MAP2K3, MAP2K4 and MAP2K6 mark. The TXY signature appears at Thr-180–Tyr-182. Tyr-182 carries the post-translational modification Phosphotyrosine; by MAP2K3, MAP2K4 and MAP2K6. Disordered stretches follow at residues Tyr-311–Glu-331 and Gln-343–Gln-364. Residues Pro-314–Ser-326 are compositionally biased toward acidic residues. Tyr-323 carries the phosphotyrosine; by ZAP70 modification.

It belongs to the protein kinase superfamily. CMGC Ser/Thr protein kinase family. MAP kinase subfamily. Interacts with HDAC3 and DUSP16. Requires Mg(2+) as cofactor. Post-translationally, dually phosphorylated on Thr-180 and Tyr-182 by MAP2K3/MKK3, MAP2K4/MKK4 and MAP2K6/MKK6, which activates the enzyme. In terms of tissue distribution, highest levels in the brain and heart. Also expressed in the placenta, lung, liver, skeletal muscle, kidney and pancreas.

It is found in the cytoplasm. It localises to the nucleus. It carries out the reaction L-seryl-[protein] + ATP = O-phospho-L-seryl-[protein] + ADP + H(+). The enzyme catalyses L-threonyl-[protein] + ATP = O-phospho-L-threonyl-[protein] + ADP + H(+). Activated by phosphorylation on threonine and tyrosine by MAP2K3/MKK3, MAP2K4/MKK4 and MAP2K6/MKK6. MAP2K3/MKK3 and MAP2K6/MKK6 are both essential for the activation of MAPK11 induced by environmental stress. HDAC3 interacts directly and selectively with MAPK11 to repress ATF2 transcriptional activity, and regulate TNF gene expression in LPS-stimulated cells. Inhibited by SB203580 and pyridinyl-imidazole related compounds. Its function is as follows. Serine/threonine kinase which acts as an essential component of the MAP kinase signal transduction pathway. MAPK11 is one of the four p38 MAPKs which play an important role in the cascades of cellular responses evoked by extracellular stimuli such as pro-inflammatory cytokines or physical stress leading to direct activation of transcription factors. Accordingly, p38 MAPKs phosphorylate a broad range of proteins and it has been estimated that they may have approximately 200 to 300 substrates each. MAPK11 functions are mostly redundant with those of MAPK14. Some of the targets are downstream kinases which are activated through phosphorylation and further phosphorylate additional targets. RPS6KA5/MSK1 and RPS6KA4/MSK2 can directly phosphorylate and activate transcription factors such as CREB1, ATF1, the NF-kappa-B isoform RELA/NFKB3, STAT1 and STAT3, but can also phosphorylate histone H3 and the nucleosomal protein HMGN1. RPS6KA5/MSK1 and RPS6KA4/MSK2 play important roles in the rapid induction of immediate-early genes in response to stress or mitogenic stimuli, either by inducing chromatin remodeling or by recruiting the transcription machinery. On the other hand, two other kinase targets, MAPKAPK2/MK2 and MAPKAPK3/MK3, participate in the control of gene expression mostly at the post-transcriptional level, by phosphorylating ZFP36 (tristetraprolin) and ELAVL1, and by regulating EEF2K, which is important for the elongation of mRNA during translation. MKNK1/MNK1 and MKNK2/MNK2, two other kinases activated by p38 MAPKs, regulate protein synthesis by phosphorylating the initiation factor EIF4E2. In the cytoplasm, the p38 MAPK pathway is an important regulator of protein turnover. For example, CFLAR is an inhibitor of TNF-induced apoptosis whose proteasome-mediated degradation is regulated by p38 MAPK phosphorylation. Ectodomain shedding of transmembrane proteins is regulated by p38 MAPKs as well. In response to inflammatory stimuli, p38 MAPKs phosphorylate the membrane-associated metalloprotease ADAM17. Such phosphorylation is required for ADAM17-mediated ectodomain shedding of TGF-alpha family ligands, which results in the activation of EGFR signaling and cell proliferation. Additional examples of p38 MAPK substrates are the FGFR1. FGFR1 can be translocated from the extracellular space into the cytosol and nucleus of target cells, and regulates processes such as rRNA synthesis and cell growth. FGFR1 translocation requires p38 MAPK activation. In the nucleus, many transcription factors are phosphorylated and activated by p38 MAPKs in response to different stimuli. Classical examples include ATF1, ATF2, ATF6, ELK1, PTPRH, DDIT3, TP53/p53 and MEF2C and MEF2A. The p38 MAPKs are emerging as important modulators of gene expression by regulating chromatin modifiers and remodelers. The promoters of several genes involved in the inflammatory response, such as IL6, IL8 and IL12B, display a p38 MAPK-dependent enrichment of histone H3 phosphorylation on 'Ser-10' (H3S10ph) in LPS-stimulated myeloid cells. This phosphorylation enhances the accessibility of the cryptic NF-kappa-B-binding sites marking promoters for increased NF-kappa-B recruitment. Phosphorylates NLRP1 downstream of MAP3K20/ZAK in response to UV-B irradiation and ribosome collisions, promoting activation of the NLRP1 inflammasome and pyroptosis. Phosphorylates methyltransferase DOT1L on 'Ser-834', 'Thr-900', 'Ser-902', 'Thr-984', 'Ser-1001', 'Ser-1009' and 'Ser-1104'. In Homo sapiens (Human), this protein is Mitogen-activated protein kinase 11 (MAPK11).